A 203-amino-acid chain; its full sequence is Holliday junction branch migration complex subunit RuvA (203 aa).

The tract at residues 1-63 (MIAFVSGPVA…EDSLTLYGFV (63 aa)) is domain I. Positions 64–141 (DDDERQVFEL…GEPLGTGGPA (78 aa)) are domain II. A flexible linker region spans residues 141 to 145 (AIGRA). Residues 146 to 203 (VTTGWREQLHAALIGLGYATREADEAVAAVAPQAEAAGGTPQVGQLLKAALQTLNRTR) are domain III.

This sequence belongs to the RuvA family. Homotetramer. Forms an RuvA(8)-RuvB(12)-Holliday junction (HJ) complex. HJ DNA is sandwiched between 2 RuvA tetramers; dsDNA enters through RuvA and exits via RuvB. An RuvB hexamer assembles on each DNA strand where it exits the tetramer. Each RuvB hexamer is contacted by two RuvA subunits (via domain III) on 2 adjacent RuvB subunits; this complex drives branch migration. In the full resolvosome a probable DNA-RuvA(4)-RuvB(12)-RuvC(2) complex forms which resolves the HJ.

The protein resides in the cytoplasm. In terms of biological role, the RuvA-RuvB-RuvC complex processes Holliday junction (HJ) DNA during genetic recombination and DNA repair, while the RuvA-RuvB complex plays an important role in the rescue of blocked DNA replication forks via replication fork reversal (RFR). RuvA specifically binds to HJ cruciform DNA, conferring on it an open structure. The RuvB hexamer acts as an ATP-dependent pump, pulling dsDNA into and through the RuvAB complex. HJ branch migration allows RuvC to scan DNA until it finds its consensus sequence, where it cleaves and resolves the cruciform DNA. This chain is Holliday junction branch migration complex subunit RuvA, found in Streptomyces avermitilis (strain ATCC 31267 / DSM 46492 / JCM 5070 / NBRC 14893 / NCIMB 12804 / NRRL 8165 / MA-4680).